The chain runs to 542 residues: GMP synthase [glutamine-hydrolyzing] (542 aa).

Residues 28 to 218 (MIVILDFGSQ…VYHICECEPT (191 aa)) enclose the Glutamine amidotransferase type-1 domain. Cys105 functions as the Nucleophile in the catalytic mechanism. Active-site residues include His192 and Glu194. One can recognise a GMPS ATP-PPase domain in the interval 219 to 417 (WTTEAFVDET…IGLPEEIVRR (199 aa)). Residue 246 to 252 (SGGVDSS) participates in ATP binding.

Homodimer.

It catalyses the reaction XMP + L-glutamine + ATP + H2O = GMP + L-glutamate + AMP + diphosphate + 2 H(+). It participates in purine metabolism; GMP biosynthesis; GMP from XMP (L-Gln route): step 1/1. In terms of biological role, catalyzes the synthesis of GMP from XMP. The sequence is that of GMP synthase [glutamine-hydrolyzing] from Crocosphaera subtropica (strain ATCC 51142 / BH68) (Cyanothece sp. (strain ATCC 51142)).